A 284-amino-acid chain; its full sequence is D-tagatose-1,6-bisphosphate aldolase subunit GatY (284 aa).

Catalysis depends on aspartate 82, which acts as the Proton donor. Zn(2+) contacts are provided by histidine 83 and histidine 180. Position 181 (glycine 181) interacts with dihydroxyacetone phosphate. Residue histidine 208 coordinates Zn(2+). Dihydroxyacetone phosphate is bound by residues 209–211 and 230–233; these read GAS and NVAT.

Belongs to the class II fructose-bisphosphate aldolase family. TagBP aldolase GatY subfamily. Forms a complex with GatZ. The cofactor is Zn(2+).

The enzyme catalyses D-tagatofuranose 1,6-bisphosphate = D-glyceraldehyde 3-phosphate + dihydroxyacetone phosphate. The protein operates within carbohydrate metabolism; D-tagatose 6-phosphate degradation; D-glyceraldehyde 3-phosphate and glycerone phosphate from D-tagatose 6-phosphate: step 2/2. Catalytic subunit of the tagatose-1,6-bisphosphate aldolase GatYZ, which catalyzes the reversible aldol condensation of dihydroxyacetone phosphate (DHAP or glycerone-phosphate) with glyceraldehyde 3-phosphate (G3P) to produce tagatose 1,6-bisphosphate (TBP). Requires GatZ subunit for full activity and stability. Is involved in the catabolism of galactitol. The polypeptide is D-tagatose-1,6-bisphosphate aldolase subunit GatY (Shigella flexneri).